We begin with the raw amino-acid sequence, 217 residues long: Protein canopy 4 (217 aa).

A signal peptide spans 1–27; it reads MEMFTVFLFYMFSLVLANQEERLPNKC. Disulfide bonds link C27–C185, C30–C173, and C83–C145. The tract at residues 194-217 is disordered; it reads MGMKGSEEESEGKDGKETHDAGEL. Basic and acidic residues predominate over residues 205 to 217; it reads GKDGKETHDAGEL.

Belongs to the canopy family.

Its subcellular location is the secreted. This chain is Protein canopy 4 (cnpy4), found in Danio rerio (Zebrafish).